Here is a 1091-residue protein sequence, read N- to C-terminus: Leucine--tRNA ligase, cytoplasmic (1091 aa).

The short motif at 53–63 (PYMNGYLHIGH) is the 'HIGH' region element. Residues 715–719 (KMSKS) carry the 'KMSKS' region motif. Lys-718 is a binding site for ATP.

It belongs to the class-I aminoacyl-tRNA synthetase family.

The protein resides in the cytoplasm. It is found in the cytosol. The catalysed reaction is tRNA(Leu) + L-leucine + ATP = L-leucyl-tRNA(Leu) + AMP + diphosphate. In terms of biological role, catalyzes the specific attachment of an amino acid to its cognate tRNA in a two step reaction: the amino acid (AA) is first activated by ATP to form AA-AMP and then transferred to the acceptor end of the tRNA. This is Leucine--tRNA ligase, cytoplasmic from Arabidopsis thaliana (Mouse-ear cress).